Reading from the N-terminus, the 957-residue chain is Glycine dehydrogenase (decarboxylating) (957 aa).

At lysine 708 the chain carries N6-(pyridoxal phosphate)lysine.

The protein belongs to the GcvP family. As to quaternary structure, the glycine cleavage system is composed of four proteins: P, T, L and H. The cofactor is pyridoxal 5'-phosphate.

It catalyses the reaction N(6)-[(R)-lipoyl]-L-lysyl-[glycine-cleavage complex H protein] + glycine + H(+) = N(6)-[(R)-S(8)-aminomethyldihydrolipoyl]-L-lysyl-[glycine-cleavage complex H protein] + CO2. The glycine cleavage system catalyzes the degradation of glycine. The P protein binds the alpha-amino group of glycine through its pyridoxal phosphate cofactor; CO(2) is released and the remaining methylamine moiety is then transferred to the lipoamide cofactor of the H protein. The sequence is that of Glycine dehydrogenase (decarboxylating) from Salmonella agona (strain SL483).